Consider the following 483-residue polypeptide: Probable cobyric acid synthase (483 aa).

A GATase cobBQ-type domain is found at 247–433 (ELHIQIIKLP…LHGIFHNFAF (187 aa)). The active-site Nucleophile is C325. H425 is a catalytic residue.

The protein belongs to the CobB/CobQ family. CobQ subfamily.

It functions in the pathway cofactor biosynthesis; adenosylcobalamin biosynthesis. Functionally, catalyzes amidations at positions B, D, E, and G on adenosylcobyrinic A,C-diamide. NH(2) groups are provided by glutamine, and one molecule of ATP is hydrogenolyzed for each amidation. The protein is Probable cobyric acid synthase of Thermococcus gammatolerans (strain DSM 15229 / JCM 11827 / EJ3).